A 36-amino-acid chain; its full sequence is Mating hormone A-factor 1 (36 aa).

Residues 1-21 constitute a propeptide that is removed on maturation; sequence MQPSTATAAPKEKTSSEKKDN. A Cysteine methyl ester modification is found at cysteine 33. A lipid anchor (S-farnesyl cysteine) is attached at cysteine 33. Residues 34 to 36 constitute a propeptide, removed in mature form; the sequence is VIA.

It localises to the cell membrane. The active factor is excreted into the culture medium by haploid cells of the A mating type and acts on cells of the opposite mating type (type alpha). It mediates the conjugation process between the two types by inhibiting the initiation of DNA synthesis in type alpha cells and synchronizing them with type A. The chain is Mating hormone A-factor 1 (MFA1) from Saccharomyces cerevisiae (strain ATCC 204508 / S288c) (Baker's yeast).